The sequence spans 74 residues: U4-theraphotoxin-Cg1a (74 aa).

The first 19 residues, 1–19 (MNATIFALLLLLNLAMYNA), serve as a signal peptide directing secretion. A propeptide spanning residues 20 to 39 (AEQSSETDMDDTLLIPEINR) is cleaved from the precursor. Intrachain disulfides connect cysteine 42-cysteine 56, cysteine 49-cysteine 61, and cysteine 55-cysteine 71.

It belongs to the neurotoxin 36 family. 01 subfamily. Expressed by the venom gland.

Its subcellular location is the secreted. In terms of biological role, probable ion channel inhibitor. The polypeptide is U4-theraphotoxin-Cg1a (Chilobrachys guangxiensis (Chinese earth tiger tarantula)).